A 274-amino-acid polypeptide reads, in one-letter code: Cytochrome c oxidase subunit 3 (274 aa).

Helical transmembrane passes span 22 to 42 (PSPW…GGVM), 47 to 67 (FAAG…SMLL), 93 to 113 (GVVL…WAFF), 137 to 157 (PFEV…TITV), 170 to 190 (TILY…LQWV), 208 to 228 (FFVA…FLTV), and 248 to 268 (AAIW…VSVY).

Belongs to the cytochrome c oxidase subunit 3 family. Component of the cytochrome c oxidase (complex IV, CIV), a multisubunit enzyme composed of a catalytic core of 3 subunits and several supernumerary subunits. The complex exists as a monomer or a dimer and forms supercomplexes (SCs) in the inner mitochondrial membrane with ubiquinol-cytochrome c oxidoreductase (cytochrome b-c1 complex, complex III, CIII).

The protein localises to the mitochondrion inner membrane. The enzyme catalyses 4 Fe(II)-[cytochrome c] + O2 + 8 H(+)(in) = 4 Fe(III)-[cytochrome c] + 2 H2O + 4 H(+)(out). Component of the cytochrome c oxidase, the last enzyme in the mitochondrial electron transport chain which drives oxidative phosphorylation. The respiratory chain contains 3 multisubunit complexes succinate dehydrogenase (complex II, CII), ubiquinol-cytochrome c oxidoreductase (cytochrome b-c1 complex, complex III, CIII) and cytochrome c oxidase (complex IV, CIV), that cooperate to transfer electrons derived from NADH and succinate to molecular oxygen, creating an electrochemical gradient over the inner membrane that drives transmembrane transport and the ATP synthase. Cytochrome c oxidase is the component of the respiratory chain that catalyzes the reduction of oxygen to water. Electrons originating from reduced cytochrome c in the intermembrane space (IMS) are transferred via the dinuclear copper A center (CU(A)) of subunit 2 and heme A of subunit 1 to the active site in subunit 1, a binuclear center (BNC) formed by heme A3 and copper B (CU(B)). The BNC reduces molecular oxygen to 2 water molecules using 4 electrons from cytochrome c in the IMS and 4 protons from the mitochondrial matrix. The chain is Cytochrome c oxidase subunit 3 (COX3) from Allomyces macrogynus.